The chain runs to 930 residues: Semaphorin-6C (930 aa).

The first 24 residues, 1 to 24 (MPRAPHFMPLLLLLLLLSLPHTQA), serve as a signal peptide directing secretion. Residues 25–604 (AFPQDPLPLL…ASASRSVPIP (580 aa)) are Extracellular-facing. The Sema domain maps to 30 to 516 (PLPLLISDLQ…FSGCIVYLPL (487 aa)). N70 carries an N-linked (GlcNAc...) asparagine glycan. Cystine bridges form between C111/C121, C139/C148, C262/C373, and C287/C332. Residue N286 is glycosylated (N-linked (GlcNAc...) asparagine). N-linked (GlcNAc...) asparagine glycosylation occurs at N437. Intrachain disulfides connect C479–C510, C519–C537, C525–C570, and C529–C545. The tract at residues 554–593 (TDVDQAGNQESMEHGDCQDGATGSQSGPGDSAYGVRRDLP) is disordered. The chain crosses the membrane as a helical span at residues 605–625 (LLLASVAAAFALGASVSGLLV). The Cytoplasmic portion of the chain corresponds to 626–930 (SCACRRAHRR…AVPNGGRFNF (305 aa)). Disordered stretches follow at residues 654–674 (LARLHGGGPEPPPPSKDGDAV), 716–761 (GDPW…PGQA), 775–882 (HGPQ…PGKH), and 908–930 (SLKPPLVGPSSRQAVPNGGRFNF). The span at 829–844 (ASAPARPALSAPAPRL) shows a compositional bias: low complexity.

This sequence belongs to the semaphorin family. In terms of tissue distribution, in adult tissues, expressed only in skeletal muscle.

It localises to the cell membrane. Shows growth cone collapsing activity on dorsal root ganglion (DRG) neurons in vitro. May be a stop signal for the DRG neurons in their target areas, and possibly also for other neurons. May also be involved in the maintenance and remodeling of neuronal connections. In Homo sapiens (Human), this protein is Semaphorin-6C (SEMA6C).